The chain runs to 454 residues: Prenyltransferase nscD (454 aa).

It belongs to the tryptophan dimethylallyltransferase family.

Its pathway is secondary metabolite biosynthesis. Prenyltransferase; part of the gene cluster that mediates the biosynthesis of neosartoricin, a prenylated anthracenone that exhibits T-cell antiproliferative activity, suggestive of a physiological role as an immunosuppressive agent. The non-reducing polyketide synthase nscA probably synthesizes and cyclizes the decaketide backbone. The hydrolase nscB then mediates the product release through hydrolysis followed by spontaneous decarboxylation. The prenyltransferase nscD catalyzes the addition of the dimethylallyl group to the aromatic C5. The FAD-dependent monooxygenase nscC is then responsible for the stereospecific hydroxylation at C2. There is no gene encoding O-acetyltransferase in the nsc gene cluster; thus, the last step of 2-O-acetylation leading to neosartoricin may be catalyzed by an unidentified O-acetyltransferase. The sequence is that of Prenyltransferase nscD from Neosartorya fischeri (strain ATCC 1020 / DSM 3700 / CBS 544.65 / FGSC A1164 / JCM 1740 / NRRL 181 / WB 181) (Aspergillus fischerianus).